Here is a 60-residue protein sequence, read N- to C-terminus: Large ribosomal subunit protein eL37 (60 aa).

Zn(2+)-binding residues include cysteine 19, cysteine 22, cysteine 34, and cysteine 37. The segment at 19–37 (CRRCGSISYHARHKVCSAC) adopts a C4-type zinc-finger fold.

The protein belongs to the eukaryotic ribosomal protein eL37 family. Requires Zn(2+) as cofactor.

Functionally, binds to the 23S rRNA. This is Large ribosomal subunit protein eL37 from Methanosphaerula palustris (strain ATCC BAA-1556 / DSM 19958 / E1-9c).